Consider the following 125-residue polypeptide: Small ribosomal subunit protein uS12 (125 aa).

Residues 1–30 are disordered; it reads MPTISQLVRKPRAAKPLKSKVPALGNSPQK. A compositionally biased stretch (basic residues) spans 9–18; that stretch reads RKPRAAKPLK. Asp-89 bears the 3-methylthioaspartic acid mark. Residues 103–125 form a disordered region; that stretch reads DTAGVKDRKQGRSKYGAKKPKSA. A compositionally biased stretch (basic residues) spans 113 to 125; the sequence is GRSKYGAKKPKSA.

This sequence belongs to the universal ribosomal protein uS12 family. As to quaternary structure, part of the 30S ribosomal subunit. Contacts proteins S8 and S17. May interact with IF1 in the 30S initiation complex.

Functionally, with S4 and S5 plays an important role in translational accuracy. Its function is as follows. Interacts with and stabilizes bases of the 16S rRNA that are involved in tRNA selection in the A site and with the mRNA backbone. Located at the interface of the 30S and 50S subunits, it traverses the body of the 30S subunit contacting proteins on the other side and probably holding the rRNA structure together. The combined cluster of proteins S8, S12 and S17 appears to hold together the shoulder and platform of the 30S subunit. This Nitrosospira multiformis (strain ATCC 25196 / NCIMB 11849 / C 71) protein is Small ribosomal subunit protein uS12.